The primary structure comprises 218 residues: Tubulin polymerization-promoting protein (218 aa).

The tract at residues Met-1 to Pro-45 is disordered. Residues Ala-2–Phe-115 form a mediates interaction with LIMK1 region. At Thr-15 the chain carries Phosphothreonine. Residues Ser-19, Ser-31, and Ser-34 each carry the phosphoserine modification. Positions Glu-33–Pro-45 are enriched in low complexity. Positions 60, 71, 79, and 82 each coordinate Zn(2+). A Phosphothreonine modification is found at Thr-91. Position 106 is a phosphoserine (Ser-106). The O-linked (GlcNAc) serine glycan is linked to Ser-151. Phosphoserine is present on residues Ser-158 and Ser-159. The tract at residues Leu-165–Val-192 is disordered. Residues Ser-174–Gly-183 are compositionally biased toward basic and acidic residues.

Belongs to the TPPP family. Homodimer. Binds tubulin; binding is inhibited by GTP. Interacts with MAPK1. Interacts with GAPDH; the interaction is direct. Interacts with LIMK1 (via the PDZ domain); the interaction is direct. Interacts with LIMK2. Interacts with HDAC6; thereby inhibiting the tubulin deacetylase activity of HDAC6. Interacts with aggregated SNCA; may have a pro-aggregatory role in synucleinopathies. Interacts with DYNLL1. Interacts (via C-terminus) with S100A2, S100A6 and S100B; these interactions inhibit TPPP dimerization. The cofactor is Mg(2+). In terms of processing, phosphorylated by LIMK1 on serine residues; phosphorylation may alter the tubulin polymerization activity. Phosphorylation by LIMK2, but not LIMK1, regulates astral microtubule organization at early stage of mitosis. Phosphorylation by ROCK1 at Ser-31, Ser-106 and Ser-158 inhibits interaction with HDAC6, resulting in decreased acetylation of tubulin, increased cell motility and entry into S-phase. Phosphorylation by CDK1 inhibits the microtubule polymerizing activity. Post-translationally, degraded by the proteasome; zinc-binding inhibits degradation by the proteasome. As to expression, predominantly expressed in mature oligodendrocytes.

It localises to the golgi outpost. The protein localises to the cytoplasm. Its subcellular location is the cytoskeleton. The protein resides in the microtubule organizing center. It is found in the nucleus. It localises to the spindle. The catalysed reaction is GTP + H2O = GDP + phosphate + H(+). Its function is as follows. Regulator of microtubule dynamics that plays a key role in myelination by promoting elongation of the myelin sheath. Acts as a microtubule nucleation factor in oligodendrocytes: specifically localizes to the postsynaptic Golgi apparatus region, also named Golgi outpost, and promotes microtubule nucleation, an important step for elongation of the myelin sheath. Required for both uniform polarized growth of distal microtubules as well as directing the branching of proximal processes. Shows magnesium-dependent GTPase activity; the role of the GTPase activity is unclear. In addition to microtubule nucleation activity, also involved in microtubule bundling and stabilization of existing microtubules, thereby maintaining the integrity of the microtubule network. Regulates microtubule dynamics by promoting tubulin acetylation: acts by inhibiting the tubulin deacetylase activity of HDAC6. Also regulates cell migration: phosphorylation by ROCK1 inhibits interaction with HDAC6, resulting in decreased acetylation of tubulin and increased cell motility. Plays a role in cell proliferation by regulating the G1/S-phase transition. Involved in astral microtubule organization and mitotic spindle orientation during early stage of mitosis; this process is regulated by phosphorylation by LIMK2. The polypeptide is Tubulin polymerization-promoting protein (Rattus norvegicus (Rat)).